Here is a 190-residue protein sequence, read N- to C-terminus: Potassium-transporting ATPase KdpC subunit (190 aa).

The helical transmembrane segment at 10–30 (TFLFLLLITGGVYPLLTTALG) threads the bilayer.

It belongs to the KdpC family. In terms of assembly, the system is composed of three essential subunits: KdpA, KdpB and KdpC.

The protein resides in the cell inner membrane. Its function is as follows. Part of the high-affinity ATP-driven potassium transport (or Kdp) system, which catalyzes the hydrolysis of ATP coupled with the electrogenic transport of potassium into the cytoplasm. This subunit acts as a catalytic chaperone that increases the ATP-binding affinity of the ATP-hydrolyzing subunit KdpB by the formation of a transient KdpB/KdpC/ATP ternary complex. In Escherichia coli O127:H6 (strain E2348/69 / EPEC), this protein is Potassium-transporting ATPase KdpC subunit.